The following is a 673-amino-acid chain: Armadillo repeat-containing protein 8 (673 aa).

A2 carries the post-translational modification N-acetylalanine. ARM repeat units follow at residues 51-92, 95-134, 138-176, 178-217, 224-265, 269-309, 313-352, 374-413, 416-455, 458-497, 501-540, 543-585, 588-627, and 634-673; these read NKQK…SLAM, ENNVKSLLDCHIIPALLQGLLSPDLKFIEACLRCPRTIFT, TPEELLYTDATVIPHLMALLSRSRYTQEYICQIFSHCCK, PDHQTILFNHGAVQNIAHLLTSLSYKVRMQALKCFSVLAF, MTLV…YMCR, IRTD…YLIE, ELQRIASITDHLIAMLADYFKYPSSVSAITDIKRLDHDLK, DIRKKIIETENMMDRIVTGLSESSVKVRLAAVRCLHSLSR, QQLRTSFQDHAVWKPLMKVLQNAPDEILVVASSMLCNLLL, SPSKEPILESGAVELLCGLTQSENPALRVNGIWALMNTAF, QKIKADILRSLSTEQLFRLLSDSDLNVLMKTLGLLRNLLS, PHID…NIAD, TAKDLIMTNDDILQKIKYYMGHSHVKLQLAAMFCISNLIW, and QERQDKLRDMGIVDILHKLSQSPDSNLCDKAKMALQQYLA. S337 is subject to Phosphoserine. S512 bears the Phosphoserine mark.

As to quaternary structure, identified in the CTLH complex that contains GID4, RANBP9 and/or RANBP10, MKLN1, MAEA, RMND5A (or alternatively its paralog RMND5B), GID8, ARMC8, WDR26 and YPEL5. Within this complex, MAEA, RMND5A (or alternatively its paralog RMND5B), GID8, WDR26, and RANBP9 and/or RANBP10 form the catalytic core, while GID4, MKLN1, ARMC8 and YPEL5 have ancillary roles.

Its subcellular location is the nucleus. It localises to the cytoplasm. Its function is as follows. Component of the CTLH E3 ubiquitin-protein ligase complex that selectively accepts ubiquitin from UBE2H and mediates ubiquitination and subsequent proteasomal degradation of the transcription factor HBP1. This is Armadillo repeat-containing protein 8 (ARMC8) from Pongo abelii (Sumatran orangutan).